Here is a 94-residue protein sequence, read N- to C-terminus: Protein S100-A1 (94 aa).

Position 2 is a blocked amino end (Gly) (glycine 2). 2 EF-hand domains span residues isoleucine 13 to alanine 48 and lysine 50 to alanine 85. Positions 28, 33, 63, 65, 67, 69, and 74 each coordinate Ca(2+). The residue at position 86 (cysteine 86) is an S-nitrosocysteine.

This sequence belongs to the S-100 family. As to quaternary structure, dimer of either two alpha chains, or two beta chains, or one alpha and one beta chain. Also forms heterodimers with S100P. Interacts with AGER. Interacts with CAPZA1. Interacts with FKBP4. Interacts with RYR1 and RYR2. Interacts with CACYBP in a calcium-dependent manner. Interacts with PPP5C (via TPR repeats); the interaction is calcium-dependent and modulates PPP5C activity. Interacts with ATP2A2 and PLN in a Ca(2+)-dependent manner. Interacts with mitochondrial F1-ATPase subunits ATP5F1A and ATP5F1B; these interactions increase F1-ATPase activity. Post-translationally, glutathionylated; glutathionylation increases affinity to calcium about 10-fold. As to expression, although predominant among the water-soluble brain proteins, S100 is also found in a variety of other tissues.

The protein resides in the cytoplasm. It is found in the sarcoplasmic reticulum. Its subcellular location is the mitochondrion. Small calcium binding protein that plays important roles in several biological processes such as Ca(2+) homeostasis, chondrocyte biology and cardiomyocyte regulation. In response to an increase in intracellular Ca(2+) levels, binds calcium which triggers conformational changes. These changes allow interactions with specific target proteins and modulate their activity. Regulates a network in cardiomyocytes controlling sarcoplasmic reticulum Ca(2+) cycling and mitochondrial function through interaction with the ryanodine receptors RYR1 and RYR2, sarcoplasmic reticulum Ca(2+)-ATPase/ATP2A2 and mitochondrial F1-ATPase. Facilitates diastolic Ca(2+) dissociation and myofilament mechanics in order to improve relaxation during diastole. In Bos taurus (Bovine), this protein is Protein S100-A1 (S100A1).